A 100-amino-acid chain; its full sequence is Aspartyl/glutamyl-tRNA(Asn/Gln) amidotransferase subunit C (100 aa).

Belongs to the GatC family. In terms of assembly, heterotrimer of A, B and C subunits.

The enzyme catalyses L-glutamyl-tRNA(Gln) + L-glutamine + ATP + H2O = L-glutaminyl-tRNA(Gln) + L-glutamate + ADP + phosphate + H(+). The catalysed reaction is L-aspartyl-tRNA(Asn) + L-glutamine + ATP + H2O = L-asparaginyl-tRNA(Asn) + L-glutamate + ADP + phosphate + 2 H(+). In terms of biological role, allows the formation of correctly charged Asn-tRNA(Asn) or Gln-tRNA(Gln) through the transamidation of misacylated Asp-tRNA(Asn) or Glu-tRNA(Gln) in organisms which lack either or both of asparaginyl-tRNA or glutaminyl-tRNA synthetases. The reaction takes place in the presence of glutamine and ATP through an activated phospho-Asp-tRNA(Asn) or phospho-Glu-tRNA(Gln). This Streptococcus thermophilus (strain ATCC BAA-491 / LMD-9) protein is Aspartyl/glutamyl-tRNA(Asn/Gln) amidotransferase subunit C.